Reading from the N-terminus, the 671-residue chain is Copper amine oxidase 1 (671 aa).

An N2 region spans residues 3–106; that stretch reads PHPLAILSEE…QHRVVGKEHH (104 aa). Positions 107–211 are N3; that stretch reads ASLTLSEFDT…DRPATGGKGE (105 aa). Position 319–330 (319–330) interacts with substrate; sequence AFDFGDGGGGNM. Aspartate 321 serves as the catalytic Proton acceptor. Cysteine 340 and cysteine 366 are oxidised to a cystine. 402–407 provides a ligand contact to substrate; sequence LANYEY. The Schiff-base intermediate with substrate; via topaquinone role is filled by tyrosine 405. Tyrosine 405 carries the 2',4',5'-topaquinone modification. Positions 455 and 457 each coordinate Cu cation. Residue aspartate 464 participates in Mn(2+) binding. Asparagine 471 carries an N-linked (GlcNAc...) asparagine glycan. Aspartate 606 provides a ligand contact to Mn(2+). Histidine 617 provides a ligand contact to Cu cation.

It belongs to the copper/topaquinone oxidase family. Homodimer. The cofactor is Cu cation. Zn(2+) is required as a cofactor. It depends on L-topaquinone as a cofactor. Requires Mn(2+) as cofactor. Post-translationally, topaquinone (TPQ) is generated by copper-dependent autoxidation of a specific tyrosyl residue.

The catalysed reaction is histamine + O2 + H2O = imidazole-4-acetaldehyde + H2O2 + NH4(+). The chain is Copper amine oxidase 1 (AO-I) from Aspergillus niger.